A 233-amino-acid polypeptide reads, in one-letter code: Ras-related protein RabV (233 aa).

15 to 22 lines the GTP pocket; the sequence is GEKEVGKS. The Effector region signature appears at 37–45; the sequence is YIPTIGIDF. GTP-binding positions include 63–67 and 122–125; these read DYVSH and TKSD. The segment at 143–182 is disordered; that stretch reads QNNNNNNNNNNNNNNNNNNNNNNNNNNNNNSNNNNNNNLQ. Low complexity predominate over residues 144-180; the sequence is NNNNNNNNNNNNNNNNNNNNNNNNNNNNNSNNNNNNN.

Belongs to the small GTPase superfamily. Rab family.

The polypeptide is Ras-related protein RabV (rabV) (Dictyostelium discoideum (Social amoeba)).